Here is a 273-residue protein sequence, read N- to C-terminus: 4-hydroxy-tetrahydrodipicolinate reductase (273 aa).

NAD(+) contacts are provided by residues 11 to 16 and 106 to 108; these read GATGKM and GTT. His-162 serves as the catalytic Proton donor/acceptor. His-163 provides a ligand contact to (S)-2,3,4,5-tetrahydrodipicolinate. The active-site Proton donor is Lys-166. 172–173 contacts (S)-2,3,4,5-tetrahydrodipicolinate; that stretch reads GT.

This sequence belongs to the DapB family.

The protein localises to the cytoplasm. It carries out the reaction (S)-2,3,4,5-tetrahydrodipicolinate + NAD(+) + H2O = (2S,4S)-4-hydroxy-2,3,4,5-tetrahydrodipicolinate + NADH + H(+). The catalysed reaction is (S)-2,3,4,5-tetrahydrodipicolinate + NADP(+) + H2O = (2S,4S)-4-hydroxy-2,3,4,5-tetrahydrodipicolinate + NADPH + H(+). It participates in amino-acid biosynthesis; L-lysine biosynthesis via DAP pathway; (S)-tetrahydrodipicolinate from L-aspartate: step 4/4. Its function is as follows. Catalyzes the conversion of 4-hydroxy-tetrahydrodipicolinate (HTPA) to tetrahydrodipicolinate. The protein is 4-hydroxy-tetrahydrodipicolinate reductase of Synechococcus elongatus (strain ATCC 33912 / PCC 7942 / FACHB-805) (Anacystis nidulans R2).